Consider the following 176-residue polypeptide: Secreted LysM effector ELP2 (176 aa).

Residues methionine 1–alanine 18 form the signal peptide. The span at threonine 31–alanine 45 shows a compositional bias: low complexity. A disordered region spans residues threonine 31–threonine 50. One can recognise a LysM 1 domain in the interval histidine 58–valine 102. An N-linked (GlcNAc...) asparagine glycan is attached at asparagine 111. Positions alanine 129–valine 173 constitute a LysM 2 domain.

This sequence belongs to the secreted LysM effector family. In terms of assembly, forms homodimers in a chitin-independent manner through interactions at the N-termini of EPL2 monomers. Homodimers are further polymerized in a chitin-dependent manner.

The protein localises to the secreted. Functionally, secreted effector that enables the plant pathogenic fungus to manipulate host defenses for successful infection. Binds chitin oligomers and polymer with high affinity and plays a dual role, not only in the suppression of chitin-triggered immune responses, but also in appressorium function. Does not protect fungal hyphae against plant chitinases but suppresses chitin-triggered plant immune responses. Chitin-induced polymerization of homodimers forms a contiguous ELP2 highly oligomeric super-complexe that may precipitate at infection sites to eliminate chitin oligomers, and thus suppress the activation of chitin-induced plant immunity. This Colletotrichum higginsianum (strain IMI 349063) (Crucifer anthracnose fungus) protein is Secreted LysM effector ELP2.